We begin with the raw amino-acid sequence, 288 residues long: Acetyl-coenzyme A carboxylase carboxyl transferase subunit beta (288 aa).

In terms of domain architecture, CoA carboxyltransferase N-terminal spans 34-288 (LFAKCPACKH…HLVAFHGGGQ (255 aa)). The Zn(2+) site is built by C38, C41, C56, and C59. The C4-type zinc finger occupies 38–59 (CPACKHMIYKKDLGLAKICPTC).

The protein belongs to the AccD/PCCB family. In terms of assembly, acetyl-CoA carboxylase is a heterohexamer composed of biotin carboxyl carrier protein (AccB), biotin carboxylase (AccC) and two subunits each of ACCase subunit alpha (AccA) and ACCase subunit beta (AccD). Zn(2+) is required as a cofactor.

The protein localises to the cytoplasm. It carries out the reaction N(6)-carboxybiotinyl-L-lysyl-[protein] + acetyl-CoA = N(6)-biotinyl-L-lysyl-[protein] + malonyl-CoA. It participates in lipid metabolism; malonyl-CoA biosynthesis; malonyl-CoA from acetyl-CoA: step 1/1. Functionally, component of the acetyl coenzyme A carboxylase (ACC) complex. Biotin carboxylase (BC) catalyzes the carboxylation of biotin on its carrier protein (BCCP) and then the CO(2) group is transferred by the transcarboxylase to acetyl-CoA to form malonyl-CoA. The chain is Acetyl-coenzyme A carboxylase carboxyl transferase subunit beta from Streptococcus pyogenes serotype M1.